A 528-amino-acid chain; its full sequence is Low affinity inorganic phosphate transporter 4 (528 aa).

Topologically, residues 1–18 (MALEVLEALDSARTQWYH) are cytoplasmic. The chain crosses the membrane as a helical span at residues 19 to 39 (VTAIVIAGMGFFTDAYDLFCI). The Extracellular segment spans residues 40-68 (TTVSKLLGRLYYFDPSTGKPGKLPNNVNN). Residues 69-89 (LVTGVALVGTLSGQLFFGYLG) form a helical membrane-spanning segment. Topologically, residues 90-96 (DKLGRKK) are cytoplasmic. The helical transmembrane segment at 97–117 (VYGVTLILMVACAICSGLSFG) threads the bilayer. Residues 118 to 122 (ASAKS) lie on the Extracellular side of the membrane. The chain crosses the membrane as a helical span at residues 123-143 (VMGTLCFFRFWLGFGIGGDYP). Residues 144 to 158 (LSATIMSEYANKRTR) are Cytoplasmic-facing. A helical membrane pass occupies residues 159 to 179 (GAFIAAVFAMQGVGIIFAGLV). At 180-208 (SMCLSAGFKASYHAPSFHDDPIMSTQPQG) the chain is on the extracellular side. A helical membrane pass occupies residues 209 to 229 (DLMWRLVLMIGAVPAAMTYYW). At 230 to 292 (RMKMPETGRY…NEFFTRHGRH (63 aa)) the chain is on the cytoplasmic side. Residues 293–313 (LIGTMTSWFLLDIAFYSQNLT) form a helical membrane-spanning segment. The Extracellular segment spans residues 314–341 (QKDIFPAMGLIDKDFEMNAIQEVFETSR). The helical transmembrane segment at 342–362 (AMFVIALFGTFPGYWFTVFFI) threads the bilayer. Residues 363 to 371 (EKLGRYKIQ) are Cytoplasmic-facing. A helical membrane pass occupies residues 372 to 392 (LIGFFMMSVFMFIIGVKYDYL). Residues 393-401 (RNENSHMFA) lie on the Extracellular side of the membrane. Residues 402-422 (LLYGLTFFFANFGPNSTTFVL) form a helical membrane-spanning segment. Topologically, residues 423–433 (PAELFPTRVRS) are cytoplasmic. The helical transmembrane segment at 434–454 (TCHALSAAAGKAGAMVGAFGI) threads the bilayer. Over 455-467 (QNYTQKGEQKQIK) the chain is Extracellular. N-linked (GlcNAc...) asparagine glycosylation occurs at Asn456. The helical transmembrane segment at 468-488 (HAMMILAVTNLIGFFCSFLVT) threads the bilayer. The Cytoplasmic segment spans residues 489–528 (ETKGRSLEEISGEDGRESELTPTPPNNRVPTRQEPRSETM). Composition is skewed to basic and acidic residues over residues 496–507 (EEISGEDGRESE) and 519–528 (TRQEPRSETM). The interval 496-528 (EEISGEDGRESELTPTPPNNRVPTRQEPRSETM) is disordered.

This sequence belongs to the major facilitator superfamily. Phosphate:H(+) symporter (TC 2.A.1.9) family. Expressed only in mycorrhizal roots, exclusively in cortical cells containing arbuscules, upon arbuscular mycorrhizal (AM) symbiosis with AM fungi (e.g. Gigaspora margarita and Funnelliformis mosseae). Also observed in root tips of non-mycorrhizal roots, in a phosphate (Pi) depended-manner, highest expression levels being observed in low Pi conditions.

It localises to the cell membrane. It carries out the reaction phosphate(in) + H(+)(in) = phosphate(out) + H(+)(out). Low-affinity transporter for external inorganic phosphate (Pi) probably involved in the acquisition of phosphate released by arbuscular mycorrhizal (AM) fungi (e.g. Gigaspora margarita and Funnelliformis mosseae) during AM symbiosis; required for propper mycorrhizal arbuscule morphology. Acts as a Pi-sensing machinery at the root tip level, independently of AM fungi, involved in the regulation of early root branching and lateral roots formation. The protein is Low affinity inorganic phosphate transporter 4 of Lotus japonicus (Lotus corniculatus var. japonicus).